The following is a 244-amino-acid chain: MMNLLSNDGVQVLPRPFTLNERRREVRSFVLRQGHFTPAQKRAFDHYWPRFGVDFIGQLRDLDVLFGRSAPKVLEVGFGNGAALRFAAQHEPRYDYIGIEVYAPGVGRLLNGLAEDGSRHVRLYHYDAVEVLNKEIVDGALDEIRIYFPDPWHKKRHHKRRLIQPLFATLLVRKLRVGGCLHMATDWADYAEQMWDVLDATPGLVNRAGLRGQVPCPDWRVQTRFERRGQNLGHRVWDLLYDRV.

S-adenosyl-L-methionine is bound by residues glutamate 75, glutamate 100, aspartate 127, and aspartate 150. Aspartate 150 is an active-site residue. Substrate contacts are provided by residues lysine 154, aspartate 186, and 223 to 226; that span reads TRFE.

This sequence belongs to the class I-like SAM-binding methyltransferase superfamily. TrmB family.

The catalysed reaction is guanosine(46) in tRNA + S-adenosyl-L-methionine = N(7)-methylguanosine(46) in tRNA + S-adenosyl-L-homocysteine. It functions in the pathway tRNA modification; N(7)-methylguanine-tRNA biosynthesis. Functionally, catalyzes the formation of N(7)-methylguanine at position 46 (m7G46) in tRNA. This Xylella fastidiosa (strain 9a5c) protein is tRNA (guanine-N(7)-)-methyltransferase.